The following is a 465-amino-acid chain: tRNA modification GTPase MnmE (465 aa).

Residues R27, E91, and R130 each coordinate (6S)-5-formyl-5,6,7,8-tetrahydrofolate. The 160-residue stretch at 227 to 386 (GLSTAIIGRP…LEAKIADLFF (160 aa)) folds into the TrmE-type G domain. N237 is a K(+) binding site. Residues 237–242 (NVGKSS), 256–262 (TDIAGTT), and 281–284 (DTAG) contribute to the GTP site. Residue S241 participates in Mg(2+) binding. Residues T256, I258, and T261 each contribute to the K(+) site. Position 262 (T262) interacts with Mg(2+). K465 contacts (6S)-5-formyl-5,6,7,8-tetrahydrofolate.

It belongs to the TRAFAC class TrmE-Era-EngA-EngB-Septin-like GTPase superfamily. TrmE GTPase family. Homodimer. Heterotetramer of two MnmE and two MnmG subunits. The cofactor is K(+).

The protein localises to the cytoplasm. Exhibits a very high intrinsic GTPase hydrolysis rate. Involved in the addition of a carboxymethylaminomethyl (cmnm) group at the wobble position (U34) of certain tRNAs, forming tRNA-cmnm(5)s(2)U34. This Enterococcus faecalis (strain ATCC 700802 / V583) protein is tRNA modification GTPase MnmE.